Reading from the N-terminus, the 644-residue chain is Exoribonuclease 2 (644 aa).

Residues 189–516 (RQDLTALNFV…NHRLLKAVIK (328 aa)) form the RNB domain. The region spanning 561–643 (NTRFAAEIID…ETRSIIARPA (83 aa)) is the S1 motif domain.

The protein belongs to the RNR ribonuclease family. RNase II subfamily.

Its subcellular location is the cytoplasm. The catalysed reaction is Exonucleolytic cleavage in the 3'- to 5'-direction to yield nucleoside 5'-phosphates.. Functionally, involved in mRNA degradation. Hydrolyzes single-stranded polyribonucleotides processively in the 3' to 5' direction. The protein is Exoribonuclease 2 of Salmonella gallinarum (strain 287/91 / NCTC 13346).